The following is a 504-amino-acid chain: Cytochrome P450 6a9 (504 aa).

Cys449 serves as a coordination point for heme.

The protein belongs to the cytochrome P450 family. It depends on heme as a cofactor.

It is found in the endoplasmic reticulum membrane. The protein localises to the microsome membrane. Functionally, involved in the metabolism of insect hormones and in the breakdown of synthetic insecticides. The chain is Cytochrome P450 6a9 (Cyp6a9) from Drosophila melanogaster (Fruit fly).